The sequence spans 381 residues: Cobalt-precorrin-5B C(1)-methyltransferase (381 aa).

Belongs to the CbiD family.

It catalyses the reaction Co-precorrin-5B + S-adenosyl-L-methionine = Co-precorrin-6A + S-adenosyl-L-homocysteine. It functions in the pathway cofactor biosynthesis; adenosylcobalamin biosynthesis; cob(II)yrinate a,c-diamide from sirohydrochlorin (anaerobic route): step 6/10. Functionally, catalyzes the methylation of C-1 in cobalt-precorrin-5B to form cobalt-precorrin-6A. The chain is Cobalt-precorrin-5B C(1)-methyltransferase from Clostridium botulinum (strain Alaska E43 / Type E3).